A 394-amino-acid chain; its full sequence is Ornithine aminotransferase 1 (394 aa).

At Lys-252 the chain carries N6-(pyridoxal phosphate)lysine.

This sequence belongs to the class-III pyridoxal-phosphate-dependent aminotransferase family. OAT subfamily. It depends on pyridoxal 5'-phosphate as a cofactor.

Its subcellular location is the cytoplasm. The enzyme catalyses a 2-oxocarboxylate + L-ornithine = L-glutamate 5-semialdehyde + an L-alpha-amino acid. The protein operates within amino-acid biosynthesis; L-proline biosynthesis; L-glutamate 5-semialdehyde from L-ornithine: step 1/1. Its function is as follows. Catalyzes the interconversion of ornithine to glutamate semialdehyde. This Staphylococcus saprophyticus subsp. saprophyticus (strain ATCC 15305 / DSM 20229 / NCIMB 8711 / NCTC 7292 / S-41) protein is Ornithine aminotransferase 1.